We begin with the raw amino-acid sequence, 503 residues long: Aromatase (503 aa).

3 helical membrane-spanning segments follow: residues 19 to 39 (EVMP…LLVW), 51 to 71 (GYCM…MGIG), and 303 to 323 (MLIA…FLIA). Substrate is bound by residues Asp309 and Met374. Residue Cys437 coordinates heme.

The protein belongs to the cytochrome P450 family. Heme is required as a cofactor.

The protein localises to the endoplasmic reticulum membrane. The protein resides in the microsome membrane. The enzyme catalyses testosterone + 3 reduced [NADPH--hemoprotein reductase] + 3 O2 = 17beta-estradiol + formate + 3 oxidized [NADPH--hemoprotein reductase] + 4 H2O + 4 H(+). It catalyses the reaction androst-4-ene-3,17-dione + 3 reduced [NADPH--hemoprotein reductase] + 3 O2 = estrone + formate + 3 oxidized [NADPH--hemoprotein reductase] + 4 H2O + 4 H(+). The catalysed reaction is androst-4-ene-3,17-dione + reduced [NADPH--hemoprotein reductase] + O2 = 19-hydroxyandrost-4-ene-3,17-dione + oxidized [NADPH--hemoprotein reductase] + H2O + H(+). It carries out the reaction 19-hydroxyandrost-4-ene-3,17-dione + reduced [NADPH--hemoprotein reductase] + O2 = 19-oxo-androst-4-ene-3,17-dione + oxidized [NADPH--hemoprotein reductase] + 2 H2O + H(+). The enzyme catalyses 19-oxo-androst-4-ene-3,17-dione + reduced [NADPH--hemoprotein reductase] + O2 = estrone + formate + oxidized [NADPH--hemoprotein reductase] + H2O + 2 H(+). It catalyses the reaction estrone + reduced [NADPH--hemoprotein reductase] + O2 = 2-hydroxyestrone + oxidized [NADPH--hemoprotein reductase] + H2O + H(+). The catalysed reaction is 17beta-hydroxy-5alpha-androstan-3-one + reduced [NADPH--hemoprotein reductase] + O2 = 17beta,19-dihydroxy-3-oxo-5alpha-androstanone + oxidized [NADPH--hemoprotein reductase] + H2O + H(+). It carries out the reaction 17beta,19-dihydroxy-3-oxo-5alpha-androstanone + reduced [NADPH--hemoprotein reductase] + O2 = 17beta-hydroxy-3,19-dioxo-5alpha-androstanone + oxidized [NADPH--hemoprotein reductase] + 2 H2O + H(+). The enzyme catalyses 17beta-hydroxy-3,19-dioxo-5alpha-androstanone + reduced [NADPH--hemoprotein reductase] + O2 = 17beta-hydroxy-3-oxo-19-nor-5alpha-androst-1-ene + formate + oxidized [NADPH--hemoprotein reductase] + H2O + 2 H(+). It participates in steroid hormone biosynthesis. In terms of biological role, a cytochrome P450 monooxygenase that catalyzes the conversion of C19 androgens, androst-4-ene-3,17-dione (androstenedione) and testosterone to the C18 estrogens, estrone and estradiol, respectively. Catalyzes three successive oxidations of C19 androgens: two conventional oxidations at C19 yielding 19-hydroxy and 19-oxo/19-aldehyde derivatives, followed by a third oxidative aromatization step that involves C1-beta hydrogen abstraction combined with cleavage of the C10-C19 bond to yield a phenolic A ring and formic acid. Alternatively, the third oxidative reaction yields a 19-norsteroid and formic acid. Converts dihydrotestosterone to delta1,10-dehydro 19-nordihydrotestosterone and may play a role in homeostasis of this potent androgen. Also displays 2-hydroxylase activity toward estrone. Mechanistically, uses molecular oxygen inserting one oxygen atom into a substrate, and reducing the second into a water molecule, with two electrons provided by NADPH via cytochrome P450 reductase (CPR; NADPH-ferrihemoprotein reductase). In Canis lupus familiaris (Dog), this protein is Aromatase (CYP19A1).